A 375-amino-acid polypeptide reads, in one-letter code: Putative glycyl-radical enzyme activating enzyme MJ0021 (375 aa).

The Radical SAM core domain maps to 23–246 (QCVKGGKLVL…LKVIKEFKGD (224 aa)). [4Fe-4S] cluster contacts are provided by Cys38, Cys42, and Cys45. S-adenosyl-L-methionine contacts are provided by residues 44 to 46 (YCP) and Gly87.

It belongs to the organic radical-activating enzymes family. Requires [4Fe-4S] cluster as cofactor.

It catalyses the reaction glycyl-[protein] + reduced [flavodoxin] + S-adenosyl-L-methionine = glycin-2-yl radical-[protein] + semiquinone [flavodoxin] + 5'-deoxyadenosine + L-methionine + H(+). The protein is Putative glycyl-radical enzyme activating enzyme MJ0021 of Methanocaldococcus jannaschii (strain ATCC 43067 / DSM 2661 / JAL-1 / JCM 10045 / NBRC 100440) (Methanococcus jannaschii).